The following is a 648-amino-acid chain: Leucine-rich repeat and WD repeat-containing protein 1 (648 aa).

4 LRR repeats span residues K22–L43, K48–S69, H70–P91, and E92–S113. The tract at residues V214 to G262 is disordered. Residues R226–K237 show a composition bias toward basic and acidic residues. Residue S259 is modified to Phosphoserine. WD repeat units lie at residues A392–K432, C443–Q482, V497–G536, L541–P592, and V616–C648.

This sequence belongs to the LRWD1 family. In terms of assembly, integral component of the ORC complex. Directly interacts with CDT1, GMNN and ORC2. Interacts with ORC2 only when non-ubiquitinated; this interaction prevents LRWD1 ubiquitination and degradation. Some of these interactions are regulated in a cell-cycle dependent manner. Interaction with ORC1 occurs predominantly during G1. Association with phosphorylated ORC1 during mitosis is not efficient. Interaction with CDT1 occurs during G1 phase, as well as during mitosis with phosphorylated CDT1. Interaction with GMNN occurs from G1/S to mitosis. Interaction with ORC2 is observed throughout the cell cycle. The stoichiometry of the ORCA/ORC/CDT1/GMNN complex is 1:1:1:2. Interacts with CUL4A and DDB1; this interaction may lead to ubiquitination. In terms of processing, ubiquitinated; undergoes 'Lys-48'-linked polyubiquitination leading to proteasomal degradation. Ubiquitination occurs within the WD repeats at the end of the G1 phase. Ubiquitination may be catalyzed by the CUL4-DDB1 E3 ubiquitin-protein ligase complex and other E3 ligases. As to expression, testis-specific.

The protein resides in the nucleus. The protein localises to the chromosome. It localises to the centromere. It is found in the telomere. Its subcellular location is the cytoplasm. The protein resides in the cytoskeleton. The protein localises to the microtubule organizing center. It localises to the centrosome. It is found in the kinetochore. Required for G1/S transition. Recruits and stabilizes the origin recognition complex (ORC) onto chromatin during G1 to establish pre-replication complex (preRC) and to heterochromatic sites in post-replicated cells. Binds a combination of DNA and histone methylation repressive marks on heterochromatin. Binds histone H3 and H4 trimethylation marks H3K9me3, H3K27me3 and H4K20me3 in a cooperative manner with DNA methylation. Required for silencing of major satellite repeats. May be important ORC2, ORC3 and ORC4 stability. The protein is Leucine-rich repeat and WD repeat-containing protein 1 (LRWD1) of Mus musculus (Mouse).